The following is a 362-amino-acid chain: NAD(P)H-quinone oxidoreductase subunit 1, chloroplastic (362 aa).

8 helical membrane passes run 29–49 (ILPI…IVWL), 103–123 (IAVI…HFVL), 128–148 (IGVF…LMAG), 164–184 (AAQS…ISLL), 202–222 (FFGW…ISSL), 247–267 (YSGI…LVSS), 303–323 (TMGI…SITI), and 342–362 (FLLP…LVSL).

This sequence belongs to the complex I subunit 1 family. NDH is composed of at least 16 different subunits, 5 of which are encoded in the nucleus.

It localises to the plastid. The protein localises to the chloroplast thylakoid membrane. The enzyme catalyses a plastoquinone + NADH + (n+1) H(+)(in) = a plastoquinol + NAD(+) + n H(+)(out). It carries out the reaction a plastoquinone + NADPH + (n+1) H(+)(in) = a plastoquinol + NADP(+) + n H(+)(out). Its function is as follows. NDH shuttles electrons from NAD(P)H:plastoquinone, via FMN and iron-sulfur (Fe-S) centers, to quinones in the photosynthetic chain and possibly in a chloroplast respiratory chain. The immediate electron acceptor for the enzyme in this species is believed to be plastoquinone. Couples the redox reaction to proton translocation, and thus conserves the redox energy in a proton gradient. The chain is NAD(P)H-quinone oxidoreductase subunit 1, chloroplastic from Hordeum vulgare (Barley).